Here is a 591-residue protein sequence, read N- to C-terminus: Aspartate--tRNA(Asp/Asn) ligase (591 aa).

E176 serves as a coordination point for L-aspartate. The aspartate stretch occupies residues 200 to 203 (QLFK). R222 is an L-aspartate binding site. ATP contacts are provided by residues 222-224 (RDE) and Q231. Residue H450 coordinates L-aspartate. Residue E484 participates in ATP binding. Position 491 (R491) interacts with L-aspartate. Position 536-539 (536-539 (GLDR)) interacts with ATP.

This sequence belongs to the class-II aminoacyl-tRNA synthetase family. Type 1 subfamily. In terms of assembly, homodimer.

The protein localises to the cytoplasm. The catalysed reaction is tRNA(Asx) + L-aspartate + ATP = L-aspartyl-tRNA(Asx) + AMP + diphosphate. In terms of biological role, aspartyl-tRNA synthetase with relaxed tRNA specificity since it is able to aspartylate not only its cognate tRNA(Asp) but also tRNA(Asn). Reaction proceeds in two steps: L-aspartate is first activated by ATP to form Asp-AMP and then transferred to the acceptor end of tRNA(Asp/Asn). The chain is Aspartate--tRNA(Asp/Asn) ligase from Bacillus thuringiensis (strain Al Hakam).